The chain runs to 87 residues: MSKNYVYILECSDKTLYTGWTVNIEKRLQEHNSGKYGAKYTKSRRPVKLVHLEMVDSLSGVLKREAQIKKMSRAEKLQLIKQNPERM.

A GIY-YIG domain is found at 2-78 (SKNYVYILEC…KKMSRAEKLQ (77 aa)).

Belongs to the UPF0213 family.

The chain is UPF0213 protein SYNAS_10430 from Syntrophus aciditrophicus (strain SB).